We begin with the raw amino-acid sequence, 394 residues long: MNKLIAGLEQQLAQLDAQSLRRRRRTTESPCAPRVQVDGRAMLAFCSNDYLGLAAHPRIIDALQQGASLYGAGSGASHLISGHSRAHAELEERLAEFVAPQIADARALYFCTGYMANIAILSALSGSGADLFSESLNHASLIDGARLSRANVQVYPHGDLDKLAILLAASTADNKMVVTDSVFSMDGDLAALPQLLALCEQHGAWLVVDDAHGFGVLGEHGRGVLEHFALRSPNLVYMGTLGKAAGVAGAFVAAHKSVIEWMVQRARPYIYTTAAPPAVAHALLTSLEIIGGAEGAERRAHLQTLIAQWRSALQLQRWRALASDTAIQPVVIGANDVAMKIAAALYEQNIWVPAIRPPTVPAGTARLRVTLSAAHTAEQVTQLVGALQQLEQQD.

Residue Arg-22 participates in substrate binding. 113–114 (GY) serves as a coordination point for pyridoxal 5'-phosphate. Position 138 (His-138) interacts with substrate. 3 residues coordinate pyridoxal 5'-phosphate: Ser-184, His-212, and Thr-240. Lys-243 carries the post-translational modification N6-(pyridoxal phosphate)lysine. Thr-359 serves as a coordination point for substrate.

It belongs to the class-II pyridoxal-phosphate-dependent aminotransferase family. BioF subfamily. As to quaternary structure, homodimer. Pyridoxal 5'-phosphate is required as a cofactor.

The enzyme catalyses 6-carboxyhexanoyl-[ACP] + L-alanine + H(+) = (8S)-8-amino-7-oxononanoate + holo-[ACP] + CO2. It participates in cofactor biosynthesis; biotin biosynthesis. Catalyzes the decarboxylative condensation of pimeloyl-[acyl-carrier protein] and L-alanine to produce 8-amino-7-oxononanoate (AON), [acyl-carrier protein], and carbon dioxide. This chain is 8-amino-7-oxononanoate synthase, found in Janthinobacterium sp. (strain Marseille) (Minibacterium massiliensis).